Reading from the N-terminus, the 423-residue chain is COP9 signalosome complex subunit 3 (423 aa).

One can recognise a PCI domain in the interval 197-365 (NFERALYFFE…GMVCFHDNPE (169 aa)). The segment at 402–423 (QFVQKSMGTQEDDVGSKTSSYS) is disordered.

It belongs to the CSN3 family. In terms of assembly, component of the CSN complex, probably composed of cops1, cops2, cops3, cops4, cops5, cops6, cops7, cops8 and cops9.

Its subcellular location is the cytoplasm. It is found in the nucleus. Its function is as follows. Component of the COP9 signalosome complex (CSN), a complex involved in various cellular and developmental processes. The CSN complex is an essential regulator of the ubiquitin (Ubl) conjugation pathway by mediating the deneddylation of the cullin subunits of E3 ligase complexes, leading to modify the Ubl ligase activity. This is COP9 signalosome complex subunit 3 (cops3) from Danio rerio (Zebrafish).